The chain runs to 116 residues: Non-specific lipid-transfer protein 10 (116 aa).

A signal peptide spans 1-22; the sequence is MMRVVLPLCLLLASIFAWGSEA. 4 disulfides stabilise this stretch: cysteine 26–cysteine 73, cysteine 36–cysteine 50, cysteine 51–cysteine 98, and cysteine 71–cysteine 112.

This sequence belongs to the plant LTP family.

In terms of biological role, plant non-specific lipid-transfer proteins transfer phospholipids as well as galactolipids across membranes. May play a role in wax or cutin deposition in the cell walls of expanding epidermal cells and certain secretory tissues. This chain is Non-specific lipid-transfer protein 10 (LTP10), found in Arabidopsis thaliana (Mouse-ear cress).